A 337-amino-acid polypeptide reads, in one-letter code: DNA-directed RNA polymerase subunit alpha (337 aa).

Residues 1–233 form an alpha N-terminal domain (alpha-NTD) region; the sequence is MVREEVAGST…DLFLPFLHTE (233 aa). The segment at 267 to 337 is alpha C-terminal domain (alpha-CTD); that stretch reads IPLNCIFIDQ…LPMDLPKNKF (71 aa).

The protein belongs to the RNA polymerase alpha chain family. In plastids the minimal PEP RNA polymerase catalytic core is composed of four subunits: alpha, beta, beta', and beta''. When a (nuclear-encoded) sigma factor is associated with the core the holoenzyme is formed, which can initiate transcription.

It is found in the plastid. Its subcellular location is the chloroplast. The catalysed reaction is RNA(n) + a ribonucleoside 5'-triphosphate = RNA(n+1) + diphosphate. DNA-dependent RNA polymerase catalyzes the transcription of DNA into RNA using the four ribonucleoside triphosphates as substrates. The sequence is that of DNA-directed RNA polymerase subunit alpha from Oryza nivara (Indian wild rice).